A 310-amino-acid chain; its full sequence is Methionyl-tRNA formyltransferase (310 aa).

114–117 (SLLP) provides a ligand contact to (6S)-5,6,7,8-tetrahydrofolate.

It belongs to the Fmt family.

It carries out the reaction L-methionyl-tRNA(fMet) + (6R)-10-formyltetrahydrofolate = N-formyl-L-methionyl-tRNA(fMet) + (6S)-5,6,7,8-tetrahydrofolate + H(+). Its function is as follows. Attaches a formyl group to the free amino group of methionyl-tRNA(fMet). The formyl group appears to play a dual role in the initiator identity of N-formylmethionyl-tRNA by promoting its recognition by IF2 and preventing the misappropriation of this tRNA by the elongation apparatus. This chain is Methionyl-tRNA formyltransferase, found in Granulibacter bethesdensis (strain ATCC BAA-1260 / CGDNIH1).